A 60-amino-acid polypeptide reads, in one-letter code: Large ribosomal subunit protein bL32 (60 aa).

The disordered stretch occupies residues 1–44 (MAVQQNKKSRSARDMRRSHDALEASTLSVEKTTGEVHLRHHVSP). Positions 11–22 (SARDMRRSHDAL) are enriched in basic and acidic residues.

The protein belongs to the bacterial ribosomal protein bL32 family.

The sequence is that of Large ribosomal subunit protein bL32 from Pseudomonas fluorescens (strain SBW25).